The following is a 426-amino-acid chain: Histidine--tRNA ligase (426 aa).

It belongs to the class-II aminoacyl-tRNA synthetase family. In terms of assembly, homodimer.

It localises to the cytoplasm. It carries out the reaction tRNA(His) + L-histidine + ATP = L-histidyl-tRNA(His) + AMP + diphosphate + H(+). This chain is Histidine--tRNA ligase, found in Streptococcus thermophilus (strain CNRZ 1066).